The sequence spans 300 residues: Ribosomal RNA small subunit methyltransferase H (300 aa).

Residues glycine 36 to histidine 38, aspartate 55, leucine 89, aspartate 103, and glutamine 110 each bind S-adenosyl-L-methionine.

This sequence belongs to the methyltransferase superfamily. RsmH family.

It localises to the cytoplasm. It catalyses the reaction cytidine(1402) in 16S rRNA + S-adenosyl-L-methionine = N(4)-methylcytidine(1402) in 16S rRNA + S-adenosyl-L-homocysteine + H(+). Functionally, specifically methylates the N4 position of cytidine in position 1402 (C1402) of 16S rRNA. This is Ribosomal RNA small subunit methyltransferase H from Thermotoga neapolitana (strain ATCC 49049 / DSM 4359 / NBRC 107923 / NS-E).